The primary structure comprises 257 residues: Glucosamine-6-phosphate deaminase (257 aa).

The active-site Proton acceptor; for enolization step is D64. The For ring-opening step role is filled by N133. H135 serves as the catalytic Proton acceptor; for ring-opening step. The For ring-opening step role is filled by E140.

This sequence belongs to the glucosamine/galactosamine-6-phosphate isomerase family. NagB subfamily.

The enzyme catalyses alpha-D-glucosamine 6-phosphate + H2O = beta-D-fructose 6-phosphate + NH4(+). It participates in amino-sugar metabolism; N-acetylneuraminate degradation; D-fructose 6-phosphate from N-acetylneuraminate: step 5/5. Functionally, catalyzes the reversible isomerization-deamination of glucosamine 6-phosphate (GlcN6P) to form fructose 6-phosphate (Fru6P) and ammonium ion. The protein is Glucosamine-6-phosphate deaminase of Corynebacterium urealyticum (strain ATCC 43042 / DSM 7109).